The chain runs to 374 residues: Cathepsin W (374 aa).

Residues M1–G21 form the signal peptide. The propeptide occupies I22–S127. Disulfide bonds link C150-C191 and C184-C226. C153 is an active-site residue. A glycan (N-linked (GlcNAc...) asparagine) is linked at N205. Catalysis depends on residues H291 and N329. N347 carries an N-linked (GlcNAc...) asparagine glycan.

Belongs to the peptidase C1 family.

The protein localises to the endoplasmic reticulum. In terms of biological role, may have a specific function in the mechanism or regulation of T-cell cytolytic activity. This chain is Cathepsin W (CTSW), found in Felis catus (Cat).